The primary structure comprises 125 residues: Small ribosomal subunit protein uS12m (125 aa).

The protein belongs to the universal ribosomal protein uS12 family.

Its subcellular location is the mitochondrion. In terms of biological role, protein S12 is involved in the translation initiation step. This is Small ribosomal subunit protein uS12m (RPS12) from Allium cepa (Onion).